A 68-amino-acid polypeptide reads, in one-letter code: Alpha-conotoxin-like Mr1.2 (68 aa).

The N-terminal stretch at Met1–Ser21 is a signal peptide. Residues Phe22–Lys48 constitute a propeptide that is removed on maturation. 2 cysteine pairs are disulfide-bonded: Cys50-Cys56 and Cys51-Cys64. The ser-Xaa-Pro motif, crucial for potent interaction with nAChR stretch occupies residues Ser52 to Pro54. Asn65 is subject to Asparagine amide.

The protein belongs to the conotoxin A superfamily. In terms of tissue distribution, expressed by the venom duct.

It is found in the secreted. In terms of biological role, alpha-conotoxins act on postsynaptic membranes, they bind to the nicotinic acetylcholine receptors (nAChR) and thus inhibit them. The chain is Alpha-conotoxin-like Mr1.2 from Conus marmoreus (Marble cone).